The chain runs to 907 residues: Interference hedgehog (907 aa).

Positions 1–23 (MSLTRRFSLTLLLLLPLLTSLLA) are cleaved as a signal peptide. The Extracellular segment spans residues 24 to 709 (AIPVLQANLS…SHNETFNMNP (686 aa)). Ig-like C2-type domains follow at residues 42–149 (PGVR…ASIS), 152–233 (GADT…VRLA), 252–340 (PALL…FIEL), and 346–433 (PRIL…LQVN). 3 disulfide bridges follow: cysteine 65–cysteine 127, cysteine 173–cysteine 221, and cysteine 276–cysteine 324. Residues asparagine 101, asparagine 203, asparagine 300, and asparagine 355 are each glycosylated (N-linked (GlcNAc...) asparagine). An intrachain disulfide couples cysteine 367 to cysteine 415. Residues 427–474 (GTLLQVNPKQLPDGEGTGMDSGRSSARPTHSRKQKQQTQMVPPSAPNV) are disordered. Residues 462–474 (QQTQMVPPSAPNV) show a composition bias toward polar residues. Fibronectin type-III domains follow at residues 468-578 (PPSA…LQRG) and 586-681 (VPEL…TQRP). Asparagine 473 is a glycosylation site (N-linked (GlcNAc...) asparagine). Residues arginine 504, lysine 511, and lysine 513 each coordinate heparin. Residues asparagine 537 and asparagine 548 are each glycosylated (N-linked (GlcNAc...) asparagine). Residue arginine 552 participates in heparin binding. The N-linked (GlcNAc...) asparagine glycan is linked to asparagine 568. The span at 676-688 (GRTQRPRASSTPQ) shows a compositional bias: polar residues. The disordered stretch occupies residues 676–701 (GRTQRPRASSTPQPVLHAVDTTTPSH). Asparagine 702 carries an N-linked (GlcNAc...) asparagine glycan. Residues 710-730 (MLTGTIGGGALLVLLVISACL) form a helical membrane-spanning segment. The Cytoplasmic segment spans residues 731–907 (CLCRRRSSRG…SSGSLNSVGV (177 aa)). Disordered regions lie at residues 780–805 (AQQQ…QDND) and 829–881 (MSSS…NKPG). Composition is skewed to low complexity over residues 781 to 794 (QQQQ…LQQQ) and 853 to 863 (NNNNLNQPGDG). Residues 865–878 (LANSADSPRLQASN) show a composition bias toward polar residues.

The protein belongs to the immunoglobulin superfamily. IHOG family. As to quaternary structure, homodimer. Heterotetramer; 2 iHog chains bind 2 hh chains when facilitated by heparin, heparin is required to promote high-affinity interactions between hh and iHog.

The protein localises to the membrane. In terms of biological role, mediates response to the active Hedgehog (Hh) protein signal in embryos, functioning upstream or at the level of patched (ptc). This is Interference hedgehog from Drosophila virilis (Fruit fly).